Consider the following 894-residue polypeptide: RNA polymerase I-specific transcription initiation factor RRN6 (894 aa).

The disordered stretch occupies residues 803 to 894 (PPFNLNSQSQ…KKKKRIRGFG (92 aa)). 3 stretches are compositionally biased toward polar residues: residues 806-823 (NLNS…QSSG), 832-849 (KTQS…QNLS), and 863-880 (QPPS…PRNS). Positions 881–894 (QKAKKKKKRIRGFG) are enriched in basic residues.

As to quaternary structure, component of the core factor (CF) complex, which consists of RRN6, RRN7 and RRN11. The CF heterotrimer may further dimerize to form a hexamer. RRN6 interacts with RRN7, RRN11 and RRN9.

It localises to the cytoplasm. The protein resides in the nucleus. The protein localises to the nucleolus. Functionally, acts as a component of the core factor (CF) complex which is essential for the initiation of rDNA transcription by RNA polymerase I. After binding of UAF (upstream activation factor) to an upstream element of the promoter, CF is recruited in a SPT15/TBP-dependent manner to form a preinitiation complex. The polypeptide is RNA polymerase I-specific transcription initiation factor RRN6 (RRN6) (Saccharomyces cerevisiae (strain ATCC 204508 / S288c) (Baker's yeast)).